Reading from the N-terminus, the 118-residue chain is Small ribosomal subunit protein uS13 (118 aa).

The protein belongs to the universal ribosomal protein uS13 family. Part of the 30S ribosomal subunit. Forms a loose heterodimer with protein S19. Forms two bridges to the 50S subunit in the 70S ribosome.

Its function is as follows. Located at the top of the head of the 30S subunit, it contacts several helices of the 16S rRNA. In the 70S ribosome it contacts the 23S rRNA (bridge B1a) and protein L5 of the 50S subunit (bridge B1b), connecting the 2 subunits; these bridges are implicated in subunit movement. Contacts the tRNAs in the A and P-sites. This is Small ribosomal subunit protein uS13 from Carsonella ruddii (strain PV).